A 161-amino-acid polypeptide reads, in one-letter code: Regulator of ribonuclease activity A (161 aa).

The protein belongs to the RraA family. As to quaternary structure, homotrimer. Binds to both RNA-binding sites in the C-terminal region of Rne and to RhlB.

Its subcellular location is the cytoplasm. Its function is as follows. Globally modulates RNA abundance by binding to RNase E (Rne) and regulating its endonucleolytic activity. Can modulate Rne action in a substrate-dependent manner by altering the composition of the degradosome. Modulates RNA-binding and helicase activities of the degradosome. The polypeptide is Regulator of ribonuclease activity A (Tolumonas auensis (strain DSM 9187 / NBRC 110442 / TA 4)).